A 119-amino-acid polypeptide reads, in one-letter code: MVQENKNFATAKAKSIRVSPRKLNLVAAFIRNMKVSEALVQLTFSPKRISKVVKACLQSAVANAENNLGLDIDRLVITNATVGKALVMKRVMPRAKGRATRINKFFSNLYITVTEKEDN.

It belongs to the universal ribosomal protein uL22 family. Part of the 50S ribosomal subunit.

In terms of biological role, this protein binds specifically to 23S rRNA; its binding is stimulated by other ribosomal proteins, e.g. L4, L17, and L20. It is important during the early stages of 50S assembly. It makes multiple contacts with different domains of the 23S rRNA in the assembled 50S subunit and ribosome. The globular domain of the protein is located near the polypeptide exit tunnel on the outside of the subunit, while an extended beta-hairpin is found that lines the wall of the exit tunnel in the center of the 70S ribosome. This is Large ribosomal subunit protein uL22 from Rickettsia bellii (strain OSU 85-389).